The sequence spans 343 residues: MKTSDFDYNLPQEYIAQKPVEPRDSSRLLVLNRQSGELTNRIFGEITDYFKPGDVLVMNDSRVLPARIKGIKQDTSAKIEILLLKRDGEGCWEALLKPGKRTKPGTIIDIHQKGGVVSIQAEVLADKEDGIKLLRFSDETHLMKLGEVPLPPYIHTPVADPERYQTVYALTNGSVAAPTAGLHFTPELLKRLTEMGVICTYVTLHIGLDTFRPVKEEDPKDHKIHREYGILSKETASAICCAKETGKRVFCVGTSATRLVEQASHLSQTSLITSYSGWADLFILPGYKFRVADCFITNFHLPRSTPLMLTSAFAGWPFLRKAYEKAISEHYRFYSFGDAMLIL.

Belongs to the QueA family. In terms of assembly, monomer.

Its subcellular location is the cytoplasm. It carries out the reaction 7-aminomethyl-7-carbaguanosine(34) in tRNA + S-adenosyl-L-methionine = epoxyqueuosine(34) in tRNA + adenine + L-methionine + 2 H(+). It functions in the pathway tRNA modification; tRNA-queuosine biosynthesis. Functionally, transfers and isomerizes the ribose moiety from AdoMet to the 7-aminomethyl group of 7-deazaguanine (preQ1-tRNA) to give epoxyqueuosine (oQ-tRNA). This Dehalococcoides mccartyi (strain CBDB1) protein is S-adenosylmethionine:tRNA ribosyltransferase-isomerase.